The primary structure comprises 287 residues: Glycine--tRNA ligase alpha subunit (287 aa).

Belongs to the class-II aminoacyl-tRNA synthetase family. Tetramer of two alpha and two beta subunits.

The protein resides in the cytoplasm. The enzyme catalyses tRNA(Gly) + glycine + ATP = glycyl-tRNA(Gly) + AMP + diphosphate. This chain is Glycine--tRNA ligase alpha subunit, found in Campylobacter jejuni subsp. jejuni serotype O:23/36 (strain 81-176).